The sequence spans 1439 residues: Fanconi anemia group A protein homolog (1439 aa).

The interval 1–20 (MPGSPARGAAMGGGPRGLRK) is disordered. Positions 19 to 35 (RKTWTELLAGRVKKQKY) match the Nuclear localization signal motif.

Belongs to the multisubunit FA complex composed of FANCA, FANCB, FANCC, FANCE, FANCF, FANCG, FANCL/PHF9 and FANCM. In complex with FANCF, FANCG and FANCL, but not with FANCC, nor FANCE, interacts with HES1; this interaction may be essential for the stability and nuclear localization of FA core complex proteins. The complex with FANCC and FANCG may also include EIF2AK2 and HSP70. Interacts with FAAP20; interaction is direct. In terms of processing, phosphorylated primarily on serine residues. Phosphorylation is required for the formation of the nuclear complex. As to expression, mainly expressed in testis and lymphoid tissues like thymus, lymph nodes, and spleen, and at lower levels in kidney and ovary.

It localises to the nucleus. It is found in the cytoplasm. Its function is as follows. DNA repair protein that may operate in a postreplication repair or a cell cycle checkpoint function. May be involved in interstrand DNA cross-link repair and in the maintenance of normal chromosome stability. The sequence is that of Fanconi anemia group A protein homolog (Fanca) from Mus musculus (Mouse).